Consider the following 325-residue polypeptide: Beta-lactamase 1 (325 aa).

The first 26 residues, 1 to 26, serve as a signal peptide directing secretion; it reads MRIRPTRRLLLGAVAPLALVPLVACG. Residues 30–50 are disordered; it reads GSESGQQPGLGGCGTSAHGSA. Serine 93 (acyl-ester intermediate) is an active-site residue. Position 270-272 (270-272) interacts with substrate; the sequence is KSG.

Belongs to the class-A beta-lactamase family.

It carries out the reaction a beta-lactam + H2O = a substituted beta-amino acid. The protein is Beta-lactamase 1 (blaL) of Streptomyces cacaoi.